The chain runs to 245 residues: tRNA pseudouridine synthase A (245 aa).

Asp52 (nucleophile) is an active-site residue. Substrate is bound at residue Tyr111.

This sequence belongs to the tRNA pseudouridine synthase TruA family. As to quaternary structure, homodimer.

It catalyses the reaction uridine(38/39/40) in tRNA = pseudouridine(38/39/40) in tRNA. In terms of biological role, formation of pseudouridine at positions 38, 39 and 40 in the anticodon stem and loop of transfer RNAs. The protein is tRNA pseudouridine synthase A of Thermotoga neapolitana (strain ATCC 49049 / DSM 4359 / NBRC 107923 / NS-E).